The primary structure comprises 307 residues: Methionyl-tRNA formyltransferase (307 aa).

Position 108 to 111 (108 to 111 (SLLP)) interacts with (6S)-5,6,7,8-tetrahydrofolate.

This sequence belongs to the Fmt family.

The catalysed reaction is L-methionyl-tRNA(fMet) + (6R)-10-formyltetrahydrofolate = N-formyl-L-methionyl-tRNA(fMet) + (6S)-5,6,7,8-tetrahydrofolate + H(+). Its function is as follows. Attaches a formyl group to the free amino group of methionyl-tRNA(fMet). The formyl group appears to play a dual role in the initiator identity of N-formylmethionyl-tRNA by promoting its recognition by IF2 and preventing the misappropriation of this tRNA by the elongation apparatus. This is Methionyl-tRNA formyltransferase from Xanthomonas euvesicatoria pv. vesicatoria (strain 85-10) (Xanthomonas campestris pv. vesicatoria).